Here is a 154-residue protein sequence, read N- to C-terminus: Myoglobin (154 aa).

Residues 2–148 enclose the Globin domain; the sequence is GLSDGEWQLV…FRNDMAAKYK (147 aa). Ser4 is modified (phosphoserine). His65 is a nitrite binding site. His65 is an O2 binding site. Position 68 is a phosphothreonine (Thr68). His94 contributes to the heme b binding site.

This sequence belongs to the globin family. In terms of assembly, monomeric.

It localises to the cytoplasm. Its subcellular location is the sarcoplasm. It catalyses the reaction Fe(III)-heme b-[protein] + nitric oxide + H2O = Fe(II)-heme b-[protein] + nitrite + 2 H(+). The catalysed reaction is H2O2 + AH2 = A + 2 H2O. Its function is as follows. Monomeric heme protein which primary function is to store oxygen and facilitate its diffusion within muscle tissues. Reversibly binds oxygen through a pentacoordinated heme iron and enables its timely and efficient release as needed during periods of heightened demand. Depending on the oxidative conditions of tissues and cells, and in addition to its ability to bind oxygen, it also has a nitrite reductase activity whereby it regulates the production of bioactive nitric oxide. Under stress conditions, like hypoxia and anoxia, it also protects cells against reactive oxygen species thanks to its pseudoperoxidase activity. This is Myoglobin (MB) from Sapajus apella (Brown-capped capuchin).